A 409-amino-acid polypeptide reads, in one-letter code: Elongation factor Tu (409 aa).

In terms of domain architecture, tr-type G spans 10-214 (KPHVNIGTIG…AVDSYIPDPE (205 aa)). The segment at 19–26 (GHVDHGKT) is G1. 19–26 (GHVDHGKT) is a binding site for GTP. Thr-26 serves as a coordination point for Mg(2+). Positions 60–64 (GITIN) are G2. Residues 81 to 84 (DCPG) are G3. Residues 81–85 (DCPGH) and 136–139 (NKED) contribute to the GTP site. The G4 stretch occupies residues 136–139 (NKED). Residues 174–176 (SGL) form a G5 region.

It belongs to the TRAFAC class translation factor GTPase superfamily. Classic translation factor GTPase family. EF-Tu/EF-1A subfamily. In terms of assembly, monomer.

The protein localises to the cytoplasm. It carries out the reaction GTP + H2O = GDP + phosphate + H(+). GTP hydrolase that promotes the GTP-dependent binding of aminoacyl-tRNA to the A-site of ribosomes during protein biosynthesis. The chain is Elongation factor Tu from Trichormus variabilis (strain ATCC 29413 / PCC 7937) (Anabaena variabilis).